The chain runs to 663 residues: tRNA (guanine(26)-N(2))-dimethyltransferase (663 aa).

Residues 1–16 (MSLARTILWLSRPLRP) constitute a mitochondrion transit peptide. The Trm1 methyltransferase domain occupies 56 to 498 (ATVTEGAAKI…APPEALWDIM (443 aa)). R83 is a binding site for S-adenosyl-L-methionine. Position 121 is a phosphoserine (S121). Positions 165 and 183 each coordinate S-adenosyl-L-methionine. Zn(2+)-binding residues include C347, C350, C383, and C386. Residue S516 is modified to Phosphoserine. Residues 534–574 (IREDANPSSRQRGLKRFQANPEANWGPRPRARPGGKAASED) form a disordered region. Positions 540–572 (PSSRQRGLKRFQANPEANWGPRPRARPGGKAAS) match the Nuclear localization signal motif. The C3H1-type zinc-finger motif lies at 599 to 626 (RLKTFPCKRFKEGTCQLGDQCCYSHSPA). Phosphoserine is present on S624. Residues 632 to 663 (GDIPIEECPETTTKISPGPKAAAGGIPGPGVD) are disordered.

The protein belongs to the class I-like SAM-binding methyltransferase superfamily. Trm1 family.

It is found in the mitochondrion. The protein localises to the nucleus. The protein resides in the cytoplasm. The enzyme catalyses guanosine(26) in tRNA + 2 S-adenosyl-L-methionine = N(2)-dimethylguanosine(26) in tRNA + 2 S-adenosyl-L-homocysteine + 2 H(+). Dimethylates a single guanine residue at position 26 of most nuclear- and mitochondrial-encoded tRNAs using S-adenosyl-L-methionine as donor of the methyl groups. tRNA guanine(26)-dimethylation is required for redox homeostasis and ensure proper cellular proliferation and oxidative stress survival. This chain is tRNA (guanine(26)-N(2))-dimethyltransferase, found in Mus musculus (Mouse).